A 452-amino-acid chain; its full sequence is Probable ECA polymerase (452 aa).

11 consecutive transmembrane segments (helical) span residues 6 to 26, 37 to 57, 63 to 83, 118 to 138, 155 to 175, 181 to 201, 207 to 227, 228 to 248, 341 to 361, 378 to 398, and 410 to 430; these read FSGL…LTWF, VFFS…TSVL, VGVA…CFYG, VILM…NGFL, GVAL…VYFL, AWLF…MIVG, IIIA…ISLW, MLVA…LKRY, LVVM…GLII, YKAA…IVLA, and VFFL…FWLF.

Belongs to the WzyE family. As to quaternary structure, probably part of a complex composed of WzxE, WzyE and WzzE.

It is found in the cell inner membrane. It participates in bacterial outer membrane biogenesis; enterobacterial common antigen biosynthesis. In terms of biological role, probably involved in the polymerization of enterobacterial common antigen (ECA) trisaccharide repeat units. This chain is Probable ECA polymerase, found in Salmonella agona (strain SL483).